We begin with the raw amino-acid sequence, 287 residues long: ATP synthase gamma chain (287 aa).

This sequence belongs to the ATPase gamma chain family. F-type ATPases have 2 components, CF(1) - the catalytic core - and CF(0) - the membrane proton channel. CF(1) has five subunits: alpha(3), beta(3), gamma(1), delta(1), epsilon(1). CF(0) has three main subunits: a, b and c. The F(1)F(0) complex interacts with SpoIIIJ and YqjG; YqgA is found in the same complex. Interacts with FloT.

The protein localises to the cell membrane. The protein resides in the membrane raft. Produces ATP from ADP in the presence of a proton gradient across the membrane. The gamma chain is believed to be important in regulating ATPase activity and the flow of protons through the CF(0) complex. This is ATP synthase gamma chain from Bacillus subtilis (strain 168).